We begin with the raw amino-acid sequence, 200 residues long: Peptidyl-tRNA hydrolase (200 aa).

A tRNA-binding site is contributed by Tyr16. Catalysis depends on His21, which acts as the Proton acceptor. The tRNA site is built by Phe67, Asn69, and Asn115.

The protein belongs to the PTH family. As to quaternary structure, monomer.

It localises to the cytoplasm. It carries out the reaction an N-acyl-L-alpha-aminoacyl-tRNA + H2O = an N-acyl-L-amino acid + a tRNA + H(+). Its function is as follows. Hydrolyzes ribosome-free peptidyl-tRNAs (with 1 or more amino acids incorporated), which drop off the ribosome during protein synthesis, or as a result of ribosome stalling. In terms of biological role, catalyzes the release of premature peptidyl moieties from peptidyl-tRNA molecules trapped in stalled 50S ribosomal subunits, and thus maintains levels of free tRNAs and 50S ribosomes. This Prochlorococcus marinus (strain AS9601) protein is Peptidyl-tRNA hydrolase.